The primary structure comprises 93 residues: Small ribosomal subunit protein uS19 (93 aa).

This sequence belongs to the universal ribosomal protein uS19 family.

Its function is as follows. Protein S19 forms a complex with S13 that binds strongly to the 16S ribosomal RNA. This is Small ribosomal subunit protein uS19 from Helicobacter pylori (strain G27).